We begin with the raw amino-acid sequence, 50 residues long: Omega-conotoxin Bu8 (50 aa).

A signal peptide is located at residue Ala1. The propeptide occupies 2 to 24; sequence EDSRGTQLHRALRKATKLSESTR. Disulfide bonds link Cys25-Cys40, Cys32-Cys44, and Cys39-Cys49. Cys49 carries the post-translational modification Cysteine amide.

Belongs to the conotoxin O1 superfamily. Expressed by the venom duct.

It is found in the secreted. Omega-conotoxins act at presynaptic membranes, they bind and block voltage-gated calcium channels (Cav). This toxin selectively and potently inhibits depolarization-activated rat Cav2.2/CACNA1B currents (IC(50)=89 nM), when coexpressed with alpha-2/delta-1 (CACNA2D1) and beta-3 (CACNB3) subunits. In vivo, is lethal to fish and displays potent analgesic activity in mice pain models of hot plate and acetic acid writhing but has fewer side effects on mouse motor function and lower toxicity in goldfish. Shows higher or similar analgesic activity in the pain models mentioned above compared to MVIIA, and lower side effects. In addition, it blocks Cav2.2/CACNA1B more rapidly than MVIIA and also dissociates more rapidly. This chain is Omega-conotoxin Bu8, found in Conus bullatus (Bubble cone).